The primary structure comprises 690 residues: Protein arginine N-methyltransferase 7 (690 aa).

SAM-dependent MTase PRMT-type domains are found at residues 14–357 (ENSW…YSLW) and 366–690 (AKSV…QKKP).

The protein belongs to the class I-like SAM-binding methyltransferase superfamily. Protein arginine N-methyltransferase family. PRMT7 subfamily.

Functionally, essential arginine methyltransferase that can both catalyze the formation of omega-N monomethylarginine (MMA) and symmetrical dimethylarginine (sDMA). Specifically mediates the symmetrical dimethylation of arginine residues in the small nuclear ribonucleoproteins SmD1 and SmD3. The polypeptide is Protein arginine N-methyltransferase 7 (Art7) (Drosophila ananassae (Fruit fly)).